A 369-amino-acid polypeptide reads, in one-letter code: Transcription initiation factor IIA large subunit (369 aa).

Composition is skewed to polar residues over residues 113-210 (HGNS…QNSP) and 218-233 (TESS…NDVP). The interval 113–248 (HGNSNYYSPP…IHDLDDAGSP (136 aa)) is disordered. The residue at position 249 (Ser249) is a Phosphoserine. The tract at residues 282–319 (IEDNEDEKKPPVDTPSDEAINSDLDDPDSDEAPETEEG) is disordered. Residues 304–319 (DLDDPDSDEAPETEEG) show a composition bias toward acidic residues.

This sequence belongs to the TFIIA subunit 1 family. TFIIA is a heterodimer of the large subunit and the small subunit gamma.

Its subcellular location is the nucleus. In terms of biological role, TFIIA is a component of the transcription machinery of RNA polymerase II and plays an important role in transcriptional activation. TFIIA in a complex with tbp mediates transcriptional activity. The polypeptide is Transcription initiation factor IIA large subunit (Schizosaccharomyces pombe (strain 972 / ATCC 24843) (Fission yeast)).